Here is a 236-residue protein sequence, read N- to C-terminus: uncharacterized protein (236 aa).

The span at 1 to 12 (MKLLGHRKSHGH) shows a compositional bias: basic residues. The disordered stretch occupies residues 1–108 (MKLLGHRKSH…KAANRARMTE (108 aa)). Over residues 13–31 (QRADASPDAGSKDGCRPDS) the composition is skewed to basic and acidic residues. Low complexity predominate over residues 32–47 (GRTSGSDTSRGSQTTG). Over residues 52 to 65 (PTPKRNQSRRHTKK) the composition is skewed to basic residues. The span at 67–78 (PVAPAPMTAAQA) shows a compositional bias: low complexity. A compositionally biased stretch (basic and acidic residues) spans 90–108 (LSREERRAEKAANRARMTE). The next 2 membrane-spanning stretches (helical) occupy residues 142-162 (NLLG…FAVP) and 166-186 (FYLS…AIIL).

It is found in the cell membrane. This is an uncharacterized protein from Mycobacterium tuberculosis (strain CDC 1551 / Oshkosh).